Here is a 236-residue protein sequence, read N- to C-terminus: Large ribosomal subunit protein uL3 (236 aa).

The protein belongs to the universal ribosomal protein uL3 family. As to quaternary structure, part of the 50S ribosomal subunit. Forms a cluster with proteins L14 and L19.

One of the primary rRNA binding proteins, it binds directly near the 3'-end of the 23S rRNA, where it nucleates assembly of the 50S subunit. This is Large ribosomal subunit protein uL3 from Mycoplasmoides gallisepticum (strain R(low / passage 15 / clone 2)) (Mycoplasma gallisepticum).